We begin with the raw amino-acid sequence, 400 residues long: N(alpha)-acyl-glutamine aminoacylase (400 aa).

Belongs to the peptidase M20 family. The cofactor is Zn(2+).

It carries out the reaction an N(2)-acyl-L-glutamine + H2O = a carboxylate + L-glutamine. The catalysed reaction is N(2)-[(2E)-3-methylhex-2-enoyl]-L-glutaminate + H2O = (2E)-3-methylhex-2-enoate + L-glutamine. The enzyme catalyses N(2)-(3-hydroxy-3-methylhexanoyl)-L-glutaminate + H2O = 3-hydroxy-3-methylhexanoate + L-glutamine. Its activity is regulated as follows. Partial loss of activity with the combination Mn(2+) and chelating agents. Activity is lost in presence of 0.5 mM dithiothreitol. Hydrolyzes odorless N-alpha-acyl-L-glutamine conjugates of short- and medium-chain fatty acids, releasing human axillary malodor compounds. The enzyme is highly specific for the glutamine residue but has a low specificity for the acyl part of the substrate. The two most common products are 3-methyl-2-hexenoic acid (3M2H) and 3-hydroxy-3-methyl-hexanoic acid (HMHA), which are produced from the odorless precursors N-alpha-3-methyl-2-hexenoyl-L-glutamine (3M2H-Gln) and N-alpha-3-hydroxy-3-methylhexanoyl-L-glutamine (HMHA-Gln). In addition, over 28 different carboxylic acids contributing to human body odor are released by this enzyme from odorless axilla secretions, including several aliphatic 3-hydroxy acids with 4-Me branches, 3,4-unsaturated, 4-Et-branched aliphatic acids, and a variety of degradation products of amino acids. The polypeptide is N(alpha)-acyl-glutamine aminoacylase (Corynebacterium striatum).